A 168-amino-acid chain; its full sequence is Secreted RxLR effector protein RXLR-C06 (168 aa).

The N-terminal stretch at 1-22 (MRIQLLWLSFAVLSTILSTCDA) is a signal peptide. The tract at residues 25–52 (DKLDPQRVQPNQNGSGHNQSIRSALKTS) is disordered. Positions 32–50 (VQPNQNGSGHNQSIRSALK) are enriched in polar residues. N37 and N42 each carry an N-linked (GlcNAc...) asparagine glycan. The RxLR-dEER signature appears at 46 to 63 (RSALKTSHGKTIADDEER). In terms of domain architecture, IQ spans 78–107 (YKAIVAKLSKYFRDYHERREIRKQRILNKS). The N-linked (GlcNAc...) asparagine glycan is linked to N105.

It belongs to the RxLR effector family.

The protein resides in the secreted. It is found in the host Golgi apparatus. Secreted effector that suppresses pattern-triggered immunity (PTI) in plant host. The sequence is that of Secreted RxLR effector protein RXLR-C06 from Plasmopara halstedii (Downy mildew of sunflower).